We begin with the raw amino-acid sequence, 404 residues long: Phosphopentomutase (404 aa).

Mn(2+) is bound by residues aspartate 10, aspartate 303, histidine 308, aspartate 344, histidine 345, and histidine 356.

This sequence belongs to the phosphopentomutase family. Mn(2+) is required as a cofactor.

It localises to the cytoplasm. It catalyses the reaction 2-deoxy-alpha-D-ribose 1-phosphate = 2-deoxy-D-ribose 5-phosphate. The catalysed reaction is alpha-D-ribose 1-phosphate = D-ribose 5-phosphate. It functions in the pathway carbohydrate degradation; 2-deoxy-D-ribose 1-phosphate degradation; D-glyceraldehyde 3-phosphate and acetaldehyde from 2-deoxy-alpha-D-ribose 1-phosphate: step 1/2. In terms of biological role, isomerase that catalyzes the conversion of deoxy-ribose 1-phosphate (dRib-1-P) and ribose 1-phosphate (Rib-1-P) to deoxy-ribose 5-phosphate (dRib-5-P) and ribose 5-phosphate (Rib-5-P), respectively. In Shewanella sp. (strain MR-4), this protein is Phosphopentomutase.